The chain runs to 125 residues: Small ribosomal subunit protein uS13 (125 aa).

This sequence belongs to the universal ribosomal protein uS13 family. As to quaternary structure, part of the 30S ribosomal subunit. Forms a loose heterodimer with protein S19. Forms two bridges to the 50S subunit in the 70S ribosome.

Located at the top of the head of the 30S subunit, it contacts several helices of the 16S rRNA. In the 70S ribosome it contacts the 23S rRNA (bridge B1a) and protein L5 of the 50S subunit (bridge B1b), connecting the 2 subunits; these bridges are implicated in subunit movement. Contacts the tRNAs in the A and P-sites. The protein is Small ribosomal subunit protein uS13 of Granulibacter bethesdensis (strain ATCC BAA-1260 / CGDNIH1).